Consider the following 239-residue polypeptide: Protein GrpE (239 aa).

Disordered stretches follow at residues 1–50 (MIEN…INTE) and 209–239 (MGHG…SEDV). A compositionally biased stretch (polar residues) spans 16–30 (VLNQDNAPEDNSSAA). Residues 218 to 239 (EEVEKDTVEEDIDSEENTSEDV) are compositionally biased toward acidic residues.

The protein belongs to the GrpE family. As to quaternary structure, homodimer.

The protein resides in the cytoplasm. Its function is as follows. Participates actively in the response to hyperosmotic and heat shock by preventing the aggregation of stress-denatured proteins, in association with DnaK and GrpE. It is the nucleotide exchange factor for DnaK and may function as a thermosensor. Unfolded proteins bind initially to DnaJ; upon interaction with the DnaJ-bound protein, DnaK hydrolyzes its bound ATP, resulting in the formation of a stable complex. GrpE releases ADP from DnaK; ATP binding to DnaK triggers the release of the substrate protein, thus completing the reaction cycle. Several rounds of ATP-dependent interactions between DnaJ, DnaK and GrpE are required for fully efficient folding. The protein is Protein GrpE of Prochlorococcus marinus (strain MIT 9312).